Here is a 63-residue protein sequence, read N- to C-terminus: Cytochrome c oxidase subunit 7C, mitochondrial (63 aa).

The N-terminal 16 residues, 1–16 (MLGQSIRRFTTSVVRR), are a transit peptide targeting the mitochondrion. The Mitochondrial matrix segment spans residues 17 to 33 (SHYEEGPGKNLPFSVEN). At Lys-25 the chain carries N6-acetyllysine; alternate. Position 25 is an N6-succinyllysine; alternate (Lys-25). Residues 34–60 (KWSLLAKMCLYFGSAFATPFLIVRHQL) traverse the membrane as a helical segment. Residues 61-63 (LKT) are Mitochondrial intermembrane-facing.

It belongs to the cytochrome c oxidase VIIc family. In terms of assembly, component of the cytochrome c oxidase (complex IV, CIV), a multisubunit enzyme composed of 14 subunits. The complex is composed of a catalytic core of 3 subunits MT-CO1, MT-CO2 and MT-CO3, encoded in the mitochondrial DNA, and 11 supernumerary subunits COX4I, COX5A, COX5B, COX6A, COX6B, COX6C, COX7A, COX7B, COX7C, COX8 and NDUFA4, which are encoded in the nuclear genome. The complex exists as a monomer or a dimer and forms supercomplexes (SCs) in the inner mitochondrial membrane with NADH-ubiquinone oxidoreductase (complex I, CI) and ubiquinol-cytochrome c oxidoreductase (cytochrome b-c1 complex, complex III, CIII), resulting in different assemblies (supercomplex SCI(1)III(2)IV(1) and megacomplex MCI(2)III(2)IV(2)). Interacts with RAB5IF.

It is found in the mitochondrion inner membrane. It functions in the pathway energy metabolism; oxidative phosphorylation. Component of the cytochrome c oxidase, the last enzyme in the mitochondrial electron transport chain which drives oxidative phosphorylation. The respiratory chain contains 3 multisubunit complexes succinate dehydrogenase (complex II, CII), ubiquinol-cytochrome c oxidoreductase (cytochrome b-c1 complex, complex III, CIII) and cytochrome c oxidase (complex IV, CIV), that cooperate to transfer electrons derived from NADH and succinate to molecular oxygen, creating an electrochemical gradient over the inner membrane that drives transmembrane transport and the ATP synthase. Cytochrome c oxidase is the component of the respiratory chain that catalyzes the reduction of oxygen to water. Electrons originating from reduced cytochrome c in the intermembrane space (IMS) are transferred via the dinuclear copper A center (CU(A)) of subunit 2 and heme A of subunit 1 to the active site in subunit 1, a binuclear center (BNC) formed by heme A3 and copper B (CU(B)). The BNC reduces molecular oxygen to 2 water molecules using 4 electrons from cytochrome c in the IMS and 4 protons from the mitochondrial matrix. The polypeptide is Cytochrome c oxidase subunit 7C, mitochondrial (COX7C) (Pongo pygmaeus (Bornean orangutan)).